A 110-amino-acid polypeptide reads, in one-letter code: Late cornified envelope protein 2D (110 aa).

This sequence belongs to the LCE family. As to expression, skin-specific. Expression was readily detected in adult trunk skin, adult arm skin, fetal skin, penal skin, vulva, esophagus and tongue. Not expressed in the cervix, rectum, lung, colon, or placenta.

Precursors of the cornified envelope of the stratum corneum. This chain is Late cornified envelope protein 2D (LCE2D), found in Homo sapiens (Human).